Reading from the N-terminus, the 308-residue chain is Aspartate carbamoyltransferase catalytic subunit (308 aa).

R57 and T58 together coordinate carbamoyl phosphate. K86 lines the L-aspartate pocket. Carbamoyl phosphate contacts are provided by R107, H135, and Q138. The L-aspartate site is built by R168 and R229. Carbamoyl phosphate is bound by residues L268 and P269.

This sequence belongs to the aspartate/ornithine carbamoyltransferase superfamily. ATCase family. As to quaternary structure, heterooligomer of catalytic and regulatory chains.

The enzyme catalyses carbamoyl phosphate + L-aspartate = N-carbamoyl-L-aspartate + phosphate + H(+). The protein operates within pyrimidine metabolism; UMP biosynthesis via de novo pathway; (S)-dihydroorotate from bicarbonate: step 2/3. Catalyzes the condensation of carbamoyl phosphate and aspartate to form carbamoyl aspartate and inorganic phosphate, the committed step in the de novo pyrimidine nucleotide biosynthesis pathway. The sequence is that of Aspartate carbamoyltransferase catalytic subunit from Pyrococcus horikoshii (strain ATCC 700860 / DSM 12428 / JCM 9974 / NBRC 100139 / OT-3).